The sequence spans 359 residues: Peptide chain release factor 1 (359 aa).

An N5-methylglutamine modification is found at Q235.

The protein belongs to the prokaryotic/mitochondrial release factor family. In terms of processing, methylated by PrmC. Methylation increases the termination efficiency of RF1.

The protein localises to the cytoplasm. Functionally, peptide chain release factor 1 directs the termination of translation in response to the peptide chain termination codons UAG and UAA. This chain is Peptide chain release factor 1, found in Chelativorans sp. (strain BNC1).